We begin with the raw amino-acid sequence, 630 residues long: tRNA uridine 5-carboxymethylaminomethyl modification enzyme MnmG (630 aa).

Residue 13 to 18 (GGGHAG) participates in FAD binding. Residue 273 to 287 (GPRYCPSIEDKIHRF) coordinates NAD(+).

The protein belongs to the MnmG family. Homodimer. Heterotetramer of two MnmE and two MnmG subunits. FAD is required as a cofactor.

The protein localises to the cytoplasm. NAD-binding protein involved in the addition of a carboxymethylaminomethyl (cmnm) group at the wobble position (U34) of certain tRNAs, forming tRNA-cmnm(5)s(2)U34. The polypeptide is tRNA uridine 5-carboxymethylaminomethyl modification enzyme MnmG (Pseudomonas aeruginosa (strain ATCC 15692 / DSM 22644 / CIP 104116 / JCM 14847 / LMG 12228 / 1C / PRS 101 / PAO1)).